The sequence spans 312 residues: Olfactory receptor 2L5 (312 aa).

The Extracellular segment spans residues 1 to 24; sequence MENYNQTSTDFILLGLFPPSKIGL. The N-linked (GlcNAc...) asparagine glycan is linked to N5. A helical membrane pass occupies residues 25 to 48; sequence FLFILFVLIFLMALIGNLSMILLI. At 49 to 56 the chain is on the cytoplasmic side; it reads FLDTHLHT. The chain crosses the membrane as a helical span at residues 57-78; the sequence is PMYFLLSQLSLIDLNYISTIVP. The Extracellular segment spans residues 79-99; it reads KMASDFLYGNKSISFIGCGIQ. C96 and C188 are oxidised to a cystine. A helical transmembrane segment spans residues 100 to 119; it reads SFFFMTFAGAEALLLTSMAY. Residues 120–138 lie on the Cytoplasmic side of the membrane; that stretch reads DRYVAICFPLHYPIRMSKR. A helical transmembrane segment spans residues 139–157; that stretch reads MYVLMITGSWMIGSINSCA. Residues 158–194 are Extracellular-facing; it reads HTVYAFRIPYCKSRAINHFFCDVPAMLTLACTDTWVY. A helical transmembrane segment spans residues 195 to 218; the sequence is EYTVFLSSTIFLVFPFTGIACSYG. At 219-235 the chain is on the cytoplasmic side; it reads WVLLAVYRMHSAEGRKK. A helical transmembrane segment spans residues 236–258; that stretch reads AYSTCSTHLTVVTFYYAPFAYTY. The Extracellular segment spans residues 259-271; sequence LCPRSLRSLTEDK. The helical transmembrane segment at 272–291 threads the bilayer; that stretch reads VLAVFYTILTPMLNPIIYSL. At 292 to 312 the chain is on the cytoplasmic side; that stretch reads RNKEVMGALTRVIQNIFSVKM.

This sequence belongs to the G-protein coupled receptor 1 family.

The protein localises to the cell membrane. Odorant receptor. This is Olfactory receptor 2L5 (OR2L5) from Homo sapiens (Human).